Here is a 314-residue protein sequence, read N- to C-terminus: MGKPEIGTTVVVDVPATTANLGPGFDCLGAALDLNNQFQLKVLEGGAERFELIIESKEGSHLRGGPDNLVYRAAQRVWREVGMQPIALEARVQLAVPPARGMGSSATAIVAGLMGANALAGEALGKEKLLELAIDIEGHPDNVVPSLLGGLCLTAQAASRRWRVVRCEWHENVQAVVAIPSIRLSTADARRAMPKQIVVPDAVSNLGSLTLLLQGLRSGNGDLITDGMHDRLHEPYRWPLIQGGSAVRKAAMDAGAWGCVISGAGPSLLALCPPDKGRAVAEAMEKSWEQEGVQTRALPLKLQSGGSRWRPKPS.

97–107 (PPARGMGSSAT) contacts ATP.

The protein belongs to the GHMP kinase family. Homoserine kinase subfamily.

It localises to the cytoplasm. The enzyme catalyses L-homoserine + ATP = O-phospho-L-homoserine + ADP + H(+). It functions in the pathway amino-acid biosynthesis; L-threonine biosynthesis; L-threonine from L-aspartate: step 4/5. Its function is as follows. Catalyzes the ATP-dependent phosphorylation of L-homoserine to L-homoserine phosphate. The sequence is that of Homoserine kinase from Synechococcus sp. (strain RCC307).